The chain runs to 237 residues: Glutathione S-transferase psoE (237 aa).

Positions V2 to T79 constitute a GST N-terminal domain. 6 residues coordinate glutathione: R37, K49, V50, E63, C64, and N99. Residue K49 coordinates substrate. A GST C-terminal domain is found at D84–T222. Residue Q108 participates in substrate binding. The segment covering E208–T222 has biased composition (basic and acidic residues). A disordered region spans residues E208–A237.

The protein belongs to the GST superfamily. Glutathione is required as a cofactor.

The protein operates within secondary metabolite biosynthesis. Functionally, glutathione S-transferase; part of the gene cluster that mediates the biosynthesis of pseurotin A, a competitive inhibitor of chitin synthase and an inducer of nerve-cell proliferation. The PKS-NRPS hybrid synthetase psoA is responsible for the biosynthesis of azaspirene, one of the first intermediates having the 1-oxa-7-azaspiro[4,4]-non-2-ene-4,6-dione core of pseurotin, via condensation of one acetyl-CoA, 4 malonyl-CoA, and a L-phenylalanine molecule. The dual-functional monooxygenase/methyltransferase psoF seems to be involved in the addition of the C3 methyl group onto the pseurotin scaffold. Azaspirene is then converted to synerazol through 4 steps including oxidation of C17 by the cytochrome P450 monooxygenase psoD, O-methylation of the hydroxy group of C8 by the methyltransferase psoC, and the trans-to-cis isomerization of the C13 olefin by the glutathione S-transferase psoE. The fourth step of synerazol production is performed by the dual-functional monooxygenase/methyltransferase psoF which seems to catalyze the epoxidation of the intermediate deepoxy-synerazol. Synerazol can be attacked by a water molecule nonenzymatically at two different positions to yield two diol products, pseurotin A and pseurotin D. This is Glutathione S-transferase psoE from Aspergillus fumigatus (strain ATCC MYA-4609 / CBS 101355 / FGSC A1100 / Af293) (Neosartorya fumigata).